A 253-amino-acid chain; its full sequence is Matrix protein (253 aa).

The disordered stretch occupies residues 1 to 26 (MLSRIKQGIKTKRSSSSSSSRSKTGD). The short motif at 55–58 (PTAP) is the PTAP/PSAP motif element.

Homomultimer. Interacts with viral nucleocapsid. Interacts with host TSG101.

It is found in the virion membrane. The protein localises to the host endomembrane system. Its subcellular location is the host nucleus membrane. Functionally, plays a major role in assembly and budding of virion, by recruiting cellular partners of the ESCRT complexes that play a key role in releasing the budding particle from the host membrane. Condensates the ribonucleocapsid core during virus assembly. This Bos taurus (Bovine) protein is Matrix protein (M).